The chain runs to 339 residues: MTIKVAINGFGRIGRSILRALYESGRRAEIAVIAVNELADAEGIAHLLKYDSSHGRFAWDVRLNNDVLQVGDDNIRLFHQSDISMLPWQELGIDIVLDCSGIYGSRADGEAHLASGAKKVLFAHPGGNDLDATVVYGVNQHLLTAEDRIVSNASCTTNCIIPIIKLLDDQFEIESGTVTTIHASMNDQPVIDAYHKDLRRTRAASQSIIPVDTKLAAGITRIFPKFCDRFEAISVRVPTINVTAIDLSVTVKSSVTVNKINELMQKSAATSFRGIVDYTELPLVSTDFNHDPHSAIVDGTQTRVSGQHLIKTLVWCDNEWGFANRMLDTTLAMAAMGFK.

12–13 (RI) lines the NAD(+) pocket. Residues 154 to 156 (SCT), Arg-200, 213 to 214 (TK), and Arg-236 contribute to the substrate site. The Nucleophile role is filled by Cys-155. An NAD(+)-binding site is contributed by Asn-318.

It belongs to the glyceraldehyde-3-phosphate dehydrogenase family. Epd subfamily. Homotetramer.

Its subcellular location is the cytoplasm. It carries out the reaction D-erythrose 4-phosphate + NAD(+) + H2O = 4-phospho-D-erythronate + NADH + 2 H(+). Its pathway is cofactor biosynthesis; pyridoxine 5'-phosphate biosynthesis; pyridoxine 5'-phosphate from D-erythrose 4-phosphate: step 1/5. In terms of biological role, catalyzes the NAD-dependent conversion of D-erythrose 4-phosphate to 4-phosphoerythronate. The sequence is that of D-erythrose-4-phosphate dehydrogenase from Photorhabdus laumondii subsp. laumondii (strain DSM 15139 / CIP 105565 / TT01) (Photorhabdus luminescens subsp. laumondii).